We begin with the raw amino-acid sequence, 559 residues long: Oxygen-dependent choline dehydrogenase (559 aa).

4-33 is an FAD binding site; sequence DYIIIGAGSAGNVLATRLTEDSDVTVLLLE. H473 acts as the Proton acceptor in catalysis.

It belongs to the GMC oxidoreductase family. FAD is required as a cofactor.

The enzyme catalyses choline + A = betaine aldehyde + AH2. The catalysed reaction is betaine aldehyde + NAD(+) + H2O = glycine betaine + NADH + 2 H(+). It functions in the pathway amine and polyamine biosynthesis; betaine biosynthesis via choline pathway; betaine aldehyde from choline (cytochrome c reductase route): step 1/1. In terms of biological role, involved in the biosynthesis of the osmoprotectant glycine betaine. Catalyzes the oxidation of choline to betaine aldehyde and betaine aldehyde to glycine betaine at the same rate. The polypeptide is Oxygen-dependent choline dehydrogenase (Cronobacter sakazakii (strain ATCC BAA-894) (Enterobacter sakazakii)).